Consider the following 488-residue polypeptide: Probable G-protein coupled receptor Mth-like 12 (488 aa).

Positions 1–17 are cleaved as a signal peptide; the sequence is MFLWLKCFCTLIIVTIA. Residues 18-215 lie on the Extracellular side of the membrane; it reads KNSSAKIPHC…NRRCYRNVMP (198 aa). Asn19, Asn34, and Asn55 each carry an N-linked (GlcNAc...) asparagine glycan. 5 disulfides stabilise this stretch: Cys27-Cys81, Cys83-Cys88, Cys92-Cys189, Cys93-Cys104, and Cys155-Cys209. Asn141 carries an N-linked (GlcNAc...) asparagine glycan. Residues 216–236 form a helical membrane-spanning segment; it reads GIAQLSVISVVGFILTLAVYL. At 237–247 the chain is on the cytoplasmic side; that stretch reads SVEKLRNLLGK. A helical membrane pass occupies residues 248-268; the sequence is CLICSLFSMFMEYFIWTMDYF. Residues 269 to 283 are Extracellular-facing; sequence RLLQSICSAAGYMKY. Residues 284-304 form a helical membrane-spanning segment; that stretch reads FFSMSSYLWFSVVSFHLWELF. Residues 305–315 are Cytoplasmic-facing; sequence TSLNRHEPQYR. Residues 316–336 traverse the membrane as a helical segment; it reads FLIYNTFVWCTAAIPTVVIFS. Topologically, residues 337 to 373 are extracellular; it reads MNQMWENDPGKSEWLPLVGYFGCSVKDWNSSSWFYSH. An N-linked (GlcNAc...) asparagine glycan is attached at Asn365. A helical membrane pass occupies residues 374–394; it reads IPIVILNSFNVIMFVLTAIYI. Residues 395 to 416 are Cytoplasmic-facing; sequence WKVKKGVKSFAQHDERNTTCLE. A helical transmembrane segment spans residues 417 to 437; it reads FNVQTYIQFVRLFLIMGASWL. Topologically, residues 438–454 are extracellular; it reads LDQLTRLAEDSHLLLDT. The helical transmembrane segment at 455–475 threads the bilayer; sequence IVLNLTVYLNAAFGILIFVLL. At 476 to 488 the chain is on the cytoplasmic side; it reads ILKGSTFKMIMER.

Belongs to the G-protein coupled receptor 2 family. Mth subfamily.

The protein localises to the cell membrane. The protein is Probable G-protein coupled receptor Mth-like 12 (mthl12) of Drosophila melanogaster (Fruit fly).